The following is a 463-amino-acid chain: uncharacterized protein (463 aa).

The protein belongs to the mycobacterial PPE family.

This is an uncharacterized protein from Mycobacterium tuberculosis (strain CDC 1551 / Oshkosh).